The primary structure comprises 894 residues: Transcriptional activator/repressor GIS1 (894 aa).

In terms of domain architecture, JmjN spans 12 to 53 (VPVFKPSMMEFANFQYFIDEITKFGIENGIVKVIPPKEWLEL). S70 is subject to Phosphoserine. Positions 90 to 110 (ENEYDNKSYNLTQWKNLAESL) form a coiled coil. One can recognise a JmjC domain in the interval 170–324 (PYDLTLWNLN…VRKQPLKCGC (155 aa)). The Bipartite nuclear localization signal motif lies at 316 to 332 (RKQPLKCGCGNKKEERK). The segment at 324 to 355 (CGNKKEERKSGPFSNLSYDSNESEQRGSITDN) is disordered. Residues 335-354 (PFSNLSYDSNESEQRGSITD) show a composition bias toward polar residues. The residue at position 343 (S343) is a Phosphoserine. Residues 361 to 385 (QKVRSFDELLNHSSQELQNLEDNKN) adopt a coiled-coil conformation. Over residues 521-554 (NISSTNNSANNSSSNNNVSTVPSSMMHSSTLNGT) the composition is skewed to low complexity. Positions 521-558 (NISSTNNSANNSSSNNNVSTVPSSMMHSSTLNGTSGLG) are disordered. Residues S690, S694, S696, S734, and S747 each carry the phosphoserine modification. A compositionally biased stretch (low complexity) spans 756 to 768 (LNGNDNSNLDSNN). The tract at residues 756-810 (LNGNDNSNLDSNNFDYSFTGNKQESNPSILNNNTNNNDNYRTSSMNNNGNNYQAH) is disordered. Polar residues-rich tracts occupy residues 769–785 (FDYSFTGNKQESNPSIL) and 795–810 (YRTSSMNNNGNNYQAH). The C2H2-type 1 zinc-finger motif lies at 828 to 851 (YICRECNRQFSSGHHLTRHKKSVH). The C2H2-type 2; atypical zinc-finger motif lies at 857-882 (HSCPRCGKRFKRRDHVLQHLNKKIPC).

It localises to the nucleus. Transcription factor involved in the regulation of gene expression upon nutrient starvation. Recognizes and binds to the post-diauxic-shift element 5'-T[AT]AGGGAT-3' in the promoter region. Can act as a transcriptional activator (e.g. of stress genes like SSA3, HSP12 and HSP26) as well as a repressor (e.g. of pyrophosphate phosphatase DPP1). GIS1 also acts as a DNA damage-responsive transcriptional repressor of photolyase PHR1. In Saccharomyces cerevisiae (strain ATCC 204508 / S288c) (Baker's yeast), this protein is Transcriptional activator/repressor GIS1 (GIS1).